A 239-amino-acid chain; its full sequence is RNA-binding protein 38 (239 aa).

Residues 34–111 enclose the RRM domain; it reads TKIFVGGLPY…RKANVNLAYL (78 aa).

This sequence belongs to the RBM38 family.

It is found in the cytoplasm. Its subcellular location is the cytosol. It localises to the nucleus. RNA-binding protein that specifically bind the 3'-UTR of CDKN1A transcripts, leading to maintain the stability of CDKN1A transcripts, thereby acting as a mediator of the p53/TP53 family to regulate CDKN1A. CDKN1A is a cyclin-dependent kinase inhibitor transcriptionally regulated by the p53/TP53 family to induce cell cycle arrest. Isoform 1, but not isoform 2, has the ability to induce cell cycle arrest in G1 and maintain the stability of CDKN1A transcripts induced by p53/TP53. Also acts as a mRNA splicing factor. Specifically regulates the expression of FGFR2-IIIb, an epithelial cell-specific isoform of FGFR2. Plays a role in myogenic differentiation. In terms of biological role, (Microbial infection) Essential factor for the splicing of the pre-mRNAs of human parvovirus B19 (B19V) and for the expression of B19V 11-kDa protein, which enhances viral replication. The sequence is that of RNA-binding protein 38 (RBM38) from Homo sapiens (Human).